Consider the following 1477-residue polypeptide: Ring canal kelch protein (1477 aa).

Disordered stretches follow at residues 19-62 (LSNG…PGLG), 76-96 (LLQQ…EGSG), and 108-137 (SQNS…YSNE). The span at 20 to 46 (SNGNSNNNNQQQQQQQQGQNPQQPAQN) shows a compositional bias: low complexity. A phosphoserine mark is found at Ser108 and Ser111. The BTB domain maps to 157-223 (CDVILVADDV…VYTATVEVNE (67 aa)). Kelch repeat units lie at residues 404-449 (ILLV…VLGD), 450-496 (KVYA…VLNG), 498-543 (IYAV…VVHG), 545-592 (LYAV…VLNN), 594-639 (LYAV…AHDG), and 641-687 (LYVV…MIDK). Position 690 (Sec690) is a non-standard amino acid, selenocysteine. Disordered stretches follow at residues 744-841 (PAAP…PQRI), 1119-1200 (HSAA…GNGT), 1291-1326 (RDAN…QYED), 1359-1416 (PLLQ…FKPK), and 1446-1477 (PVSL…EHND). Composition is skewed to low complexity over residues 763–813 (APIG…ANNN) and 820–839 (AAPA…QQPQ). Residues 1125–1137 (IPSSSNINANRTT) show a composition bias toward polar residues. The span at 1166 to 1192 (KTTSTGSGKSVTLAKKTSTAAARSSSS) shows a compositional bias: low complexity. 2 stretches are compositionally biased toward low complexity: residues 1374-1391 (QQRR…QSQQ) and 1456-1477 (TTSS…EHND).

Both proteins are expressed in ovaries, male testis, ovariectomized females, cuticle, salivary gland and imaginal disks. Kelch short protein is the predominant form and is also expressed in fat bodies. On entry into metamorphosis levels of full-length protein increase in testis and imaginal disks.

Its subcellular location is the cytoplasm. The protein resides in the cytoskeleton. Component of ring canals that regulates the flow of cytoplasm between cells. May be involved in the regulation of cytoplasm flow from nurse cells to the oocyte during oogenesis. Binds actin. The chain is Ring canal kelch protein (kel) from Drosophila melanogaster (Fruit fly).